Here is a 128-residue protein sequence, read N- to C-terminus: AECSVDIQGNDQMQFNTNAITVDKSCKQFTVNLSHPGNLPKNVMGHNWVLSTAADMQGVVTDGMASGLDKDYLKPDDSRVIAHTKLIGSGEKDSVTFDVSKLKEGEQYMSFCTFPGHSALMKGTLTLK.

One can recognise a Plastocyanin-like domain in the interval 1–128 (AECSVDIQGN…ALMKGTLTLK (128 aa)). The cysteines at positions 3 and 26 are disulfide-linked. Residues His-46, Cys-112, His-117, and Met-121 each contribute to the Cu cation site.

It is found in the periplasm. Its function is as follows. Transfers electrons from cytochrome c551 to cytochrome oxidase. This chain is Azurin, found in Pseudomonas aeruginosa.